Reading from the N-terminus, the 491-residue chain is Aspartyl/glutamyl-tRNA(Asn/Gln) amidotransferase subunit B (491 aa).

Belongs to the GatB/GatE family. GatB subfamily. As to quaternary structure, heterotrimer of A, B and C subunits.

It catalyses the reaction L-glutamyl-tRNA(Gln) + L-glutamine + ATP + H2O = L-glutaminyl-tRNA(Gln) + L-glutamate + ADP + phosphate + H(+). The catalysed reaction is L-aspartyl-tRNA(Asn) + L-glutamine + ATP + H2O = L-asparaginyl-tRNA(Asn) + L-glutamate + ADP + phosphate + 2 H(+). Its function is as follows. Allows the formation of correctly charged Asn-tRNA(Asn) or Gln-tRNA(Gln) through the transamidation of misacylated Asp-tRNA(Asn) or Glu-tRNA(Gln) in organisms which lack either or both of asparaginyl-tRNA or glutaminyl-tRNA synthetases. The reaction takes place in the presence of glutamine and ATP through an activated phospho-Asp-tRNA(Asn) or phospho-Glu-tRNA(Gln). This chain is Aspartyl/glutamyl-tRNA(Asn/Gln) amidotransferase subunit B, found in Paraburkholderia phytofirmans (strain DSM 17436 / LMG 22146 / PsJN) (Burkholderia phytofirmans).